A 293-amino-acid chain; its full sequence is Bifunctional protein FolD (293 aa).

Residues 164–166 (GRS), serine 193, and threonine 234 each bind NADP(+).

This sequence belongs to the tetrahydrofolate dehydrogenase/cyclohydrolase family. In terms of assembly, homodimer.

It carries out the reaction (6R)-5,10-methylene-5,6,7,8-tetrahydrofolate + NADP(+) = (6R)-5,10-methenyltetrahydrofolate + NADPH. The enzyme catalyses (6R)-5,10-methenyltetrahydrofolate + H2O = (6R)-10-formyltetrahydrofolate + H(+). It participates in one-carbon metabolism; tetrahydrofolate interconversion. In terms of biological role, catalyzes the oxidation of 5,10-methylenetetrahydrofolate to 5,10-methenyltetrahydrofolate and then the hydrolysis of 5,10-methenyltetrahydrofolate to 10-formyltetrahydrofolate. This Azobacteroides pseudotrichonymphae genomovar. CFP2 protein is Bifunctional protein FolD.